The primary structure comprises 356 residues: tRNA N6-adenosine threonylcarbamoyltransferase (356 aa).

Fe cation is bound by residues histidine 115 and histidine 119. Substrate-binding positions include 138–142, aspartate 171, glycine 184, and asparagine 283; that span reads LVSGG. A Fe cation-binding site is contributed by aspartate 311.

The protein belongs to the KAE1 / TsaD family. Fe(2+) serves as cofactor.

It localises to the cytoplasm. The enzyme catalyses L-threonylcarbamoyladenylate + adenosine(37) in tRNA = N(6)-L-threonylcarbamoyladenosine(37) in tRNA + AMP + H(+). Required for the formation of a threonylcarbamoyl group on adenosine at position 37 (t(6)A37) in tRNAs that read codons beginning with adenine. Is involved in the transfer of the threonylcarbamoyl moiety of threonylcarbamoyl-AMP (TC-AMP) to the N6 group of A37, together with TsaE and TsaB. TsaD likely plays a direct catalytic role in this reaction. The polypeptide is tRNA N6-adenosine threonylcarbamoyltransferase (Prochlorococcus marinus (strain SARG / CCMP1375 / SS120)).